The sequence spans 271 residues: Acetyl-coenzyme A carboxylase carboxyl transferase subunit alpha (271 aa).

The CoA carboxyltransferase C-terminal domain occupies 1-247; that stretch reads MSRELIRTVD…KKTILEALGE (247 aa).

It belongs to the AccA family. Acetyl-CoA carboxylase is a heterohexamer composed of biotin carboxyl carrier protein (AccB), biotin carboxylase (AccC) and two subunits each of ACCase subunit alpha (AccA) and ACCase subunit beta (AccD).

Its subcellular location is the cytoplasm. The catalysed reaction is N(6)-carboxybiotinyl-L-lysyl-[protein] + acetyl-CoA = N(6)-biotinyl-L-lysyl-[protein] + malonyl-CoA. Its pathway is lipid metabolism; malonyl-CoA biosynthesis; malonyl-CoA from acetyl-CoA: step 1/1. Its function is as follows. Component of the acetyl coenzyme A carboxylase (ACC) complex. First, biotin carboxylase catalyzes the carboxylation of biotin on its carrier protein (BCCP) and then the CO(2) group is transferred by the carboxyltransferase to acetyl-CoA to form malonyl-CoA. This is Acetyl-coenzyme A carboxylase carboxyl transferase subunit alpha from Clostridium perfringens (strain SM101 / Type A).